Reading from the N-terminus, the 122-residue chain is MANSLLEGVFAEVKEPCSLPMLSVDMENKENGSVGVKNSMENGRPPDPADWAVMDVVNYFRTVGFEEQASAFQEQEIDGKSLLLMTRNDVLTGLQLKLGPALKIYEYHVKPLQTKHLKNNSS.

The region spanning Trp51 to Asn119 is the SAM domain.

The sequence is that of Sterile alpha motif domain-containing protein 13 (SAMD13) from Homo sapiens (Human).